Here is a 185-residue protein sequence, read N- to C-terminus: Elongation factor P (185 aa).

This sequence belongs to the elongation factor P family.

The protein resides in the cytoplasm. The protein operates within protein biosynthesis; polypeptide chain elongation. Involved in peptide bond synthesis. Stimulates efficient translation and peptide-bond synthesis on native or reconstituted 70S ribosomes in vitro. Probably functions indirectly by altering the affinity of the ribosome for aminoacyl-tRNA, thus increasing their reactivity as acceptors for peptidyl transferase. This chain is Elongation factor P, found in Bacillus cereus (strain 03BB102).